The following is a 172-amino-acid chain: Signal peptidase complex catalytic subunit SEC11 (172 aa).

The Cytoplasmic segment spans residues M1–Q14. Residues L15 to V35 form a helical; Signal-anchor for type II membrane protein membrane-spanning segment. The Lumenal segment spans residues S36–E172. Active-site charge relay system residues include S49, H90, and D115. The C-terminal short (CTS) helix stretch occupies residues A158–L169.

This sequence belongs to the peptidase S26B family. In terms of assembly, component of the signal peptidase complex (SPC) composed of a catalytic subunit SEC11 and three accessory subunits SPC1, SPC2 and SPC3. The complex induces a local thinning of the ER membrane which is used to measure the length of the signal peptide (SP) h-region of protein substrates. This ensures the selectivity of the complex towards h-regions shorter than 18-20 amino acids. SPC associates with the translocon complex.

The protein resides in the endoplasmic reticulum membrane. The catalysed reaction is Cleavage of hydrophobic, N-terminal signal or leader sequences from secreted and periplasmic proteins.. Its function is as follows. Catalytic component of the signal peptidase complex (SPC) which catalyzes the cleavage of N-terminal signal sequences from nascent proteins as they are translocated into the lumen of the endoplasmic reticulum. Specifically cleaves N-terminal signal peptides that contain a hydrophobic alpha-helix (h-region) shorter than 18-20 amino acids. The polypeptide is Signal peptidase complex catalytic subunit SEC11 (SEC11) (Colletotrichum graminicola (strain M1.001 / M2 / FGSC 10212) (Maize anthracnose fungus)).